We begin with the raw amino-acid sequence, 190 residues long: GTP cyclohydrolase 1 (190 aa).

Zn(2+)-binding residues include C75, H78, and C146.

Belongs to the GTP cyclohydrolase I family. In terms of assembly, homomer.

It carries out the reaction GTP + H2O = 7,8-dihydroneopterin 3'-triphosphate + formate + H(+). It functions in the pathway cofactor biosynthesis; 7,8-dihydroneopterin triphosphate biosynthesis; 7,8-dihydroneopterin triphosphate from GTP: step 1/1. The chain is GTP cyclohydrolase 1 from Campylobacter concisus (strain 13826).